The primary structure comprises 830 residues: Leucine--tRNA ligase (830 aa).

Residues 34–44 carry the 'HIGH' region motif; that stretch reads PYPSGNIHMGH. A 'KMSKS' region motif is present at residues 592–596; the sequence is KMSKS. Lys595 serves as a coordination point for ATP.

The protein belongs to the class-I aminoacyl-tRNA synthetase family.

The protein resides in the cytoplasm. The enzyme catalyses tRNA(Leu) + L-leucine + ATP = L-leucyl-tRNA(Leu) + AMP + diphosphate. This is Leucine--tRNA ligase from Ehrlichia ruminantium (strain Welgevonden).